The chain runs to 742 residues: Protein-lysine N-methyltransferase SMYD4 (742 aa).

Residue 110 to 112 participates in S-adenosyl-L-methionine binding; the sequence is RSA. Residues 230-569 form the SET domain; it reads SSLSLNFSTE…SGQEIFHCYG (340 aa). Positions 295, 298, 308, 311, 317, 321, 330, and 334 each coordinate Zn(2+). The segment at 295–334 adopts an MYND-type zinc-finger fold; the sequence is CHHCLKQLLASIPCCGCSYAKYCSQNCADVAWEQYHRTEC. Residues Asn418, 534-535, and Tyr568 each bind S-adenosyl-L-methionine; that span reads NH.

This sequence belongs to the class V-like SAM-binding methyltransferase superfamily.

It localises to the nucleus. The protein resides in the cytoplasm. It carries out the reaction L-lysyl-[protein] + S-adenosyl-L-methionine = N(6)-methyl-L-lysyl-[protein] + S-adenosyl-L-homocysteine + H(+). Functionally, protein-lysine N-methyltransferase. Monomethylates PRMT5, modulating its transcriptional activity. May also act as a histone methyltransferase. Plays a critical role in cardiac development. Acts as a key epigenetic regulator of gene expression during cardiac development via its dual activities as a methyltransferase and negative regulator of HDAC1. This Gallus gallus (Chicken) protein is Protein-lysine N-methyltransferase SMYD4 (SMYD4).